Here is a 428-residue protein sequence, read N- to C-terminus: Serine--tRNA ligase (428 aa).

231-233 (TSE) is a binding site for L-serine. ATP contacts are provided by residues 262–264 (RRE) and valine 278. Residue glutamate 285 coordinates L-serine. 349–352 (ELTS) provides a ligand contact to ATP. Residue threonine 384 participates in L-serine binding.

Belongs to the class-II aminoacyl-tRNA synthetase family. Type-1 seryl-tRNA synthetase subfamily. Homodimer. The tRNA molecule binds across the dimer.

Its subcellular location is the cytoplasm. It carries out the reaction tRNA(Ser) + L-serine + ATP = L-seryl-tRNA(Ser) + AMP + diphosphate + H(+). It catalyses the reaction tRNA(Sec) + L-serine + ATP = L-seryl-tRNA(Sec) + AMP + diphosphate + H(+). It participates in aminoacyl-tRNA biosynthesis; selenocysteinyl-tRNA(Sec) biosynthesis; L-seryl-tRNA(Sec) from L-serine and tRNA(Sec): step 1/1. Functionally, catalyzes the attachment of serine to tRNA(Ser). Is also able to aminoacylate tRNA(Sec) with serine, to form the misacylated tRNA L-seryl-tRNA(Sec), which will be further converted into selenocysteinyl-tRNA(Sec). The polypeptide is Serine--tRNA ligase (Bifidobacterium longum (strain DJO10A)).